The chain runs to 168 residues: MPLLDSFKVDHTVMKAPAVRVAKIMRTPKGDDITVFDLRFCVPNKEILSPKGIHTLEHLFAGFMREHLNGDSVEIIDISPMGCRTGFYMSLIGTPNEQQVADAWLASMRDVLTVQDQSTIPELNIYQCGTYTEHSLADAHETARHVIEKGIAINKNEDLLLDEKLLNL.

The Fe cation site is built by His54, His58, and Cys128.

Belongs to the LuxS family. As to quaternary structure, homodimer. The cofactor is Fe cation.

It carries out the reaction S-(5-deoxy-D-ribos-5-yl)-L-homocysteine = (S)-4,5-dihydroxypentane-2,3-dione + L-homocysteine. In terms of biological role, involved in the synthesis of autoinducer 2 (AI-2) which is secreted by bacteria and is used to communicate both the cell density and the metabolic potential of the environment. The regulation of gene expression in response to changes in cell density is called quorum sensing. Catalyzes the transformation of S-ribosylhomocysteine (RHC) to homocysteine (HC) and 4,5-dihydroxy-2,3-pentadione (DPD). This is S-ribosylhomocysteine lyase from Mannheimia succiniciproducens (strain KCTC 0769BP / MBEL55E).